The primary structure comprises 452 residues: Bifunctional protein GlmU (452 aa).

Residues 1–230 (MSRSRSAIIL…ADEVLGVNSR (230 aa)) are pyrophosphorylase. Residues 10–13 (LAAG), lysine 24, glutamine 75, and 80–81 (GT) each bind UDP-N-acetyl-alpha-D-glucosamine. Aspartate 105 serves as a coordination point for Mg(2+). Positions 141, 156, 171, and 228 each coordinate UDP-N-acetyl-alpha-D-glucosamine. Position 228 (asparagine 228) interacts with Mg(2+). The interval 231-251 (ADLAEAEAAFQSRMRQSMMAD) is linker. Residues 252–452 (GVTLIAPETV…ARKARKDSQT (201 aa)) form an N-acetyltransferase region. Residues arginine 317 and lysine 335 each coordinate UDP-N-acetyl-alpha-D-glucosamine. Histidine 347 functions as the Proton acceptor in the catalytic mechanism. Tyrosine 350 and asparagine 361 together coordinate UDP-N-acetyl-alpha-D-glucosamine. Acetyl-CoA contacts are provided by residues alanine 364, 370–371 (NY), serine 389, threonine 407, and arginine 424.

It in the N-terminal section; belongs to the N-acetylglucosamine-1-phosphate uridyltransferase family. The protein in the C-terminal section; belongs to the transferase hexapeptide repeat family. In terms of assembly, homotrimer. The cofactor is Mg(2+).

The protein resides in the cytoplasm. It catalyses the reaction alpha-D-glucosamine 1-phosphate + acetyl-CoA = N-acetyl-alpha-D-glucosamine 1-phosphate + CoA + H(+). The enzyme catalyses N-acetyl-alpha-D-glucosamine 1-phosphate + UTP + H(+) = UDP-N-acetyl-alpha-D-glucosamine + diphosphate. The protein operates within nucleotide-sugar biosynthesis; UDP-N-acetyl-alpha-D-glucosamine biosynthesis; N-acetyl-alpha-D-glucosamine 1-phosphate from alpha-D-glucosamine 6-phosphate (route II): step 2/2. It participates in nucleotide-sugar biosynthesis; UDP-N-acetyl-alpha-D-glucosamine biosynthesis; UDP-N-acetyl-alpha-D-glucosamine from N-acetyl-alpha-D-glucosamine 1-phosphate: step 1/1. Its pathway is bacterial outer membrane biogenesis; LPS lipid A biosynthesis. Its function is as follows. Catalyzes the last two sequential reactions in the de novo biosynthetic pathway for UDP-N-acetylglucosamine (UDP-GlcNAc). The C-terminal domain catalyzes the transfer of acetyl group from acetyl coenzyme A to glucosamine-1-phosphate (GlcN-1-P) to produce N-acetylglucosamine-1-phosphate (GlcNAc-1-P), which is converted into UDP-GlcNAc by the transfer of uridine 5-monophosphate (from uridine 5-triphosphate), a reaction catalyzed by the N-terminal domain. The protein is Bifunctional protein GlmU of Maricaulis maris (strain MCS10) (Caulobacter maris).